The following is a 524-amino-acid chain: Rho guanine nucleotide exchange factor 3 (524 aa).

Ser-46 and Ser-69 each carry phosphoserine. The DH domain occupies Lys-121–Lys-303. A PH domain is found at Ile-290–Glu-448. The disordered stretch occupies residues Asp-461–Val-524. The span at Glu-472–Gln-484 shows a compositional bias: basic and acidic residues.

In terms of assembly, interacts with RHOA and RHOB.

It localises to the cytoplasm. Functionally, acts as a guanine nucleotide exchange factor (GEF) for RhoA and RhoB GTPases. In Mus musculus (Mouse), this protein is Rho guanine nucleotide exchange factor 3 (Arhgef3).